Here is a 94-residue protein sequence, read N- to C-terminus: Neutrophil defensin 1 (94 aa).

Residues 1-19 (MRTLAILAAILLVALQAQA) form the signal peptide. A propeptide spanning residues 20–64 (EPLQARADEVAAAPEQIPADNPEVVVSLAWDESLAPKHPGSRKNV) is cleaved from the precursor. 3 disulfides stabilise this stretch: Cys-66/Cys-94, Cys-68/Cys-83, and Cys-73/Cys-93. An ADP-ribosylarginine; by ART1 modification is found at Arg-78. Tyr-85 is subject to Phosphotyrosine. Position 88 is an ADP-ribosylarginine; by ART1 (Arg-88).

This sequence belongs to the alpha-defensin family. Tetramer. Dimer. Interacts with RETN. In terms of processing, ADP-ribosylation drastically reduces cytotoxic and antibacterial activities, and enhances IL8 production.

The protein localises to the secreted. Its function is as follows. Effector molecule of the innate immune system that acts via antibiotic-like properties against a broad array of infectious agents including bacteria, fungi, and viruses or by promoting the activation and maturation of some APCs. Interacts with the essential precursor of cell wall synthesis lipid II to inhibit bacterial cell wall synthesis. Inhibits adenovirus infection via inhibition of viral disassembly at the vertex region, thereby restricting the release of internal capsid protein pVI, which is required for endosomal membrane penetration during cell entry. In addition, interaction with adenovirus capsid leads to the redirection of viral particles to TLR4 thereby promoting a NLRP3-mediated inflammasome response and interleukin 1-beta (IL-1beta) release. Induces the production of proinflammatory cytokines including type I interferon (IFN) in plasmacytoid dendritic cells (pDCs) by triggering the degradation of NFKBIA and nuclear translocation of IRF1, both of which are required for activation of pDCs. This Pan troglodytes (Chimpanzee) protein is Neutrophil defensin 1 (DEFA1).